The primary structure comprises 245 residues: 1-(5-phosphoribosyl)-5-[(5-phosphoribosylamino)methylideneamino] imidazole-4-carboxamide isomerase (245 aa).

The active-site Proton acceptor is the Asp-10. The active-site Proton donor is Asp-129.

Belongs to the HisA/HisF family.

It localises to the cytoplasm. It carries out the reaction 1-(5-phospho-beta-D-ribosyl)-5-[(5-phospho-beta-D-ribosylamino)methylideneamino]imidazole-4-carboxamide = 5-[(5-phospho-1-deoxy-D-ribulos-1-ylimino)methylamino]-1-(5-phospho-beta-D-ribosyl)imidazole-4-carboxamide. The protein operates within amino-acid biosynthesis; L-histidine biosynthesis; L-histidine from 5-phospho-alpha-D-ribose 1-diphosphate: step 4/9. The protein is 1-(5-phosphoribosyl)-5-[(5-phosphoribosylamino)methylideneamino] imidazole-4-carboxamide isomerase of Parafrankia sp. (strain EAN1pec).